The primary structure comprises 101 residues: uncharacterized protein (101 aa).

This is an uncharacterized protein from Escherichia coli (strain K12).